Here is a 1605-residue protein sequence, read N- to C-terminus: Ribosome-binding protein 1 (1605 aa).

The Lumenal segment spans residues 1–7 (MDIYDTQ). Residues 8–28 (TLGVVVFGGFMVVSAIGIFLV) traverse the membrane as a helical segment. The Cytoplasmic segment spans residues 29 to 1605 (STFSMKETSY…GSSSKEGTSV (1577 aa)). The interval 44-88 (NQRKEMAKTHHQKGEKKKKEKTVEKKGKTKKKEEKPNGKIPEHDL) is disordered. Basic residues predominate over residues 52–63 (THHQKGEKKKKE). Residues 64-88 (KTVEKKGKTKKKEEKPNGKIPEHDL) show a composition bias toward basic and acidic residues. A Phosphoserine modification is found at Ser111. Positions 114–150 (SSVGHTPIATVPAMPQEKLASSPKDRKKKEKKVAKVE) are disordered. A Glycyl lysine isopeptide (Lys-Gly) (interchain with G-Cter in SUMO2) cross-link involves residue Lys148. Ser159 and Ser165 each carry phosphoserine. The interval 172-849 (ATPKEVPMVA…PGPPDCDGPL (678 aa)) is disordered. 61 repeat units span residues 196–205 (SQGKKGQGAQ), 206–215 (NQAKKGEGAQ), 216–225 (NQGKKGEGAQ), 226–235 (NQAKKGEGAQ), 236–245 (NQAKKGEGAQ), 246–255 (NQGKKGEGAQ), 256–265 (NQAKKGEGGQ), 266–275 (NQAKKGEGAQ), 276–285 (NQGKKGEGAQ), 286–295 (NQGKKGEGAQ), 296–305 (NQAKKGEGAQ), 306–315 (NQAKKGEGAQ), 316–325 (NQGKKGEGAQ), 326–335 (NQSKKGEGAQ), 336–345 (NQAKKGEGGQ), 346–355 (NQAKKGEGAQ), 356–365 (NQAKKGEGAQ), 366–375 (NQAKKGEGVQ), 376–385 (NQAKKGVEGA), 386–395 (QNQGKKGEAN), 396–405 (QNQAKKGEGG), 406–415 (QNQTKKGEGP), 416–425 (QNQGKKGEAA), 426–435 (QKQDKKIEGA), 436–445 (QNQGKKPEGT), 446–455 (SNQGKKGEGA), 456–465 (QNQGKKGEGA), 466–475 (QNQSKKGEGA), 476–485 (QNQAKKGEGG), 486–495 (QNQAKKGEGA), 496–505 (QNQAKKGEGA), 506–515 (QNQAKKGEGV), 516–525 (QNQAKKGVEG), 527–536 (QNQGKKGEAN), 537–546 (QNQAKKGEGG), 547–556 (QNQTKKGEGP), 557–566 (QNQGKKGEAA), 567–576 (QKQDKKIEGA), 577–586 (QNQGKKPEGT), 587–596 (SNQGKKGEGA), 597–606 (QNQGKKGEGA), 607–616 (QNQGKKGEGA), 617–626 (QNQGKKGEGA), 628–637 (NQGKKGEGAQ), 638–647 (NQGKKGEGAQ), 648–657 (NQGKKGEGAQ), 658–667 (NQGKKGEGPQ), 668–677 (NQAKKGEGAQ), 678–687 (NQGKKGEGAQ), 688–697 (NQGKKGEGAQ), 698–707 (NQGKKAEGVQ), 708–717 (SQSKKGEGTQ), 718–727 (NQGKKGDGNP), 729–738 (QGKKGEGASN), 739–748 (QNRKTDTVAN), 749–758 (QGTKQEGVSN), 759–768 (QVKKSEGSPN), 769–778 (QGKKAEGAPN), 779–788 (QGKKKDGSPS), 789–798 (QAKKVDAAAN), and 799–808 (QGKKSEMAPA). The 61 X 10 AA tandem repeats of [NSQ]-[NKQVGA]-[GSAQKRT]-[ASGDTK]-[KGTQSAV]-[KGAED]-[EQVGIPTDMA]-[EGVAS]-[AGVPETNS]-[AQNGPTVS] stretch occupies residues 196–808 (SQGKKGQGAQ…QGKKSEMAPA (613 aa)). Residues 197-208 (QGKKGQGAQNQA) are compositionally biased toward low complexity. Composition is skewed to polar residues over residues 224-258 (AQNQAKKGEGAQNQAKKGEGAQNQGKKGEGAQNQA), 274-338 (AQNQ…QNQA), 354-378 (AQNQAKKGEGAQNQAKKGEGVQNQA), and 385-399 (AQNQGKKGEANQNQA). The segment covering 420–433 (KKGEAAQKQDKKIE) has biased composition (basic and acidic residues). 3 stretches are compositionally biased toward polar residues: residues 435–479 (AQNQ…QNQA), 495–519 (AQNQAKKGEGAQNQAKKGEGVQNQA), and 526–540 (AQNQGKKGEANQNQA). Residues 561–574 (KKGEAAQKQDKKIE) show a composition bias toward basic and acidic residues. Polar residues-rich tracts occupy residues 576–720 (AQNQ…QNQG) and 736–769 (ASNQNRKTDTVANQGTKQEGVSNQVKKSEGSPNQ). Residue Ser786 is modified to Phosphoserine. The span at 811–821 (QKASMVQSQEA) shows a compositional bias: polar residues. Phosphoserine is present on Ser818. Lys823 participates in a covalent cross-link: Glycyl lysine isopeptide (Lys-Gly) (interchain with G-Cter in SUMO1). The residue at position 1135 (Lys1135) is an N6-acetyllysine. Residues Ser1162 and Ser1178 each carry the phosphoserine modification. 2 disordered regions span residues 1460–1481 (MRSHVEDGDVAGSPAVPPAEQD) and 1571–1605 (TTQEQLTKEKDTVKKLQEQLGKAEDGSSSKEGTSV). A compositionally biased stretch (basic and acidic residues) spans 1576 to 1598 (LTKEKDTVKKLQEQLGKAEDGSS).

As to expression, widely expressed.

It localises to the endoplasmic reticulum membrane. Functionally, acts as a ribosome receptor and mediates interaction between the ribosome and the endoplasmic reticulum membrane. The polypeptide is Ribosome-binding protein 1 (Rrbp1) (Mus musculus (Mouse)).